A 22-amino-acid polypeptide reads, in one-letter code: Zinc finger protein 326 (22 aa).

The disordered stretch occupies residues 1 to 22 (QGYGFNEPEQTRNQGGSSWEAP). Over residues 11-22 (TRNQGGSSWEAP) the composition is skewed to polar residues.

Belongs to the AKAP95 family.

It localises to the nucleus matrix. In terms of biological role, probable transcriptional activator which may play a role in neuronal differentiation. Able to bind DNA and activate expression in vitro. The sequence is that of Zinc finger protein 326 (Znf326) from Rattus norvegicus (Rat).